We begin with the raw amino-acid sequence, 157 residues long: UPF0251 protein CLJ_B1488 (157 aa).

Belongs to the UPF0251 family.

The sequence is that of UPF0251 protein CLJ_B1488 from Clostridium botulinum (strain 657 / Type Ba4).